The chain runs to 454 residues: MSHNDTIVAQATPPGRGGVGILRISGLKAREVAEAVLGKLPKPRYADYLPFNDADGTALDQGIALWFPGPNSFTGEDVLELQGHGGPVILDLLLKRILTLPGLRIAKPGEFSERAFLNDKLDLAQAEAIADLIDASSEQAARSALNSLQGAFSTRVNHLVEALTHLRIYVEAAIDFPDEEIDFLSDGKIEAQLNTVMADLDAVRAEARQGSLLREGMKVVIAGRPNAGKSSLLNALAGREAAIVTDIAGTTRDVLREHIHIDGMPLHIIDTAGLRDASDEVERIGIERAWQEIEQADRVLFMVDGTTTSAVDPADIWPDFIARLPAKLPITVVRNKADMTGETLGLSDVNGHSLIRLSARTGEGVEDLRNHLKQSMGFETNMEGGFLARRRHLQALEAAANHLDQGKAQLLGAWAGELLAEELRLAQQSLSEITGEFTSDDLLGRIFSSFCIGK.

Arg23, Glu80, and Lys120 together coordinate (6S)-5-formyl-5,6,7,8-tetrahydrofolate. The TrmE-type G domain maps to 216–377 (GMKVVIAGRP…LRNHLKQSMG (162 aa)). A K(+)-binding site is contributed by Asn226. GTP contacts are provided by residues 226-231 (NAGKSS), 245-251 (TDIAGTT), 270-273 (DTAG), 335-338 (NKAD), and 358-360 (SAR). Ser230 is a Mg(2+) binding site. 3 residues coordinate K(+): Thr245, Ile247, and Thr250. Thr251 is a binding site for Mg(2+). Lys454 contributes to the (6S)-5-formyl-5,6,7,8-tetrahydrofolate binding site.

This sequence belongs to the TRAFAC class TrmE-Era-EngA-EngB-Septin-like GTPase superfamily. TrmE GTPase family. As to quaternary structure, homodimer. Heterotetramer of two MnmE and two MnmG subunits. K(+) is required as a cofactor.

Its subcellular location is the cytoplasm. Its function is as follows. Exhibits a very high intrinsic GTPase hydrolysis rate. Involved in the addition of a carboxymethylaminomethyl (cmnm) group at the wobble position (U34) of certain tRNAs, forming tRNA-cmnm(5)s(2)U34. The polypeptide is tRNA modification GTPase MnmE (Enterobacter sp. (strain 638)).